The sequence spans 279 residues: MTARMDKRFAELKAEGRPALVTYFMGGDPDYDTSLGIMKALPEAGSDIIELGMPFSDPMADGPAIQLAGQRALKGGQTLKKTLQLAADFRKTNDLTPIVMMGYYNPIYIYGVEKFLDDALAAGIDGLIVVDLPPEMDDELCIPAIRKGINFIRLATPTTDEKRLPTVLKNTSGFVYYVSMNGITGSALPDPSLVSGAVQRIKQHTELPVCVGFGVKTAEHAKVIGGSADGVVVGTAIVNQVATSLTKDGKATPDTVQAVATLVRGLSSGARSARLVAAE.

Residues Glu50 and Asp61 each act as proton acceptor in the active site.

Belongs to the TrpA family. As to quaternary structure, tetramer of two alpha and two beta chains.

The catalysed reaction is (1S,2R)-1-C-(indol-3-yl)glycerol 3-phosphate + L-serine = D-glyceraldehyde 3-phosphate + L-tryptophan + H2O. It functions in the pathway amino-acid biosynthesis; L-tryptophan biosynthesis; L-tryptophan from chorismate: step 5/5. Its function is as follows. The alpha subunit is responsible for the aldol cleavage of indoleglycerol phosphate to indole and glyceraldehyde 3-phosphate. In Rhizobium etli (strain ATCC 51251 / DSM 11541 / JCM 21823 / NBRC 15573 / CFN 42), this protein is Tryptophan synthase alpha chain.